Here is a 190-residue protein sequence, read N- to C-terminus: MANYSTNEFKSGLKIMLDGDPCSIIENEFVKPGKGQAFNRVKFRNLKSGRVGERTFKSGDSVEGADVVDLDMEYLYTDGEFYHFMLTDGSFEQHAADVSAVGDTTKWLKEQDVYTVTLYNGAPLSVSPPNFVELEIVETDPGVRGDTAQGGSKPAKLTTGAVVAVPLFINQGEMIKVDTRSGEYVSRVKS.

Lys-34 carries the N6-(3,6-diaminohexanoyl)-5-hydroxylysine modification.

Belongs to the elongation factor P family. In terms of processing, may be beta-lysylated on the epsilon-amino group of Lys-34 by the combined action of EpmA and EpmB, and then hydroxylated on the C5 position of the same residue by EpmC (if this protein is present). Lysylation is critical for the stimulatory effect of EF-P on peptide-bond formation. The lysylation moiety may extend toward the peptidyltransferase center and stabilize the terminal 3-CCA end of the tRNA. Hydroxylation of the C5 position on Lys-34 may allow additional potential stabilizing hydrogen-bond interactions with the P-tRNA.

It localises to the cytoplasm. Its pathway is protein biosynthesis; polypeptide chain elongation. Functionally, involved in peptide bond synthesis. Alleviates ribosome stalling that occurs when 3 or more consecutive Pro residues or the sequence PPG is present in a protein, possibly by augmenting the peptidyl transferase activity of the ribosome. Modification of Lys-34 is required for alleviation. The sequence is that of Elongation factor P from Hahella chejuensis (strain KCTC 2396).